The chain runs to 215 residues: Rod-determining factor A (215 aa).

Functionally, involved in cell-shape determination. Required for the formation of rods and wild-type-like motility. In Haloferax volcanii (strain ATCC 29605 / DSM 3757 / JCM 8879 / NBRC 14742 / NCIMB 2012 / VKM B-1768 / DS2) (Halobacterium volcanii), this protein is Rod-determining factor A.